The sequence spans 400 residues: S-adenosylmethionine synthase (400 aa).

136 to 141 contacts ATP; sequence GQGSVD.

It belongs to the AdoMet synthase 2 family. Mg(2+) is required as a cofactor.

It catalyses the reaction L-methionine + ATP + H2O = S-adenosyl-L-methionine + phosphate + diphosphate. Its pathway is amino-acid biosynthesis; S-adenosyl-L-methionine biosynthesis; S-adenosyl-L-methionine from L-methionine: step 1/1. In terms of biological role, catalyzes the formation of S-adenosylmethionine from methionine and ATP. This is S-adenosylmethionine synthase (mat) from Thermoplasma acidophilum (strain ATCC 25905 / DSM 1728 / JCM 9062 / NBRC 15155 / AMRC-C165).